Consider the following 71-residue polypeptide: SRY-related protein LG28 (71 aa).

Residues 1–68 constitute a DNA-binding region (HMG box); that stretch reads VKRPMNAFMV…KHMADYPDYK (68 aa).

The protein localises to the nucleus. This is SRY-related protein LG28 from Eublepharis macularius (Leopard gecko).